The chain runs to 429 residues: UPF0597 protein BT_2080 (429 aa).

Belongs to the UPF0597 family.

The chain is UPF0597 protein BT_2080 from Bacteroides thetaiotaomicron (strain ATCC 29148 / DSM 2079 / JCM 5827 / CCUG 10774 / NCTC 10582 / VPI-5482 / E50).